The primary structure comprises 328 residues: MKPLMLQGHERAITQIKYNREGDLIFSTAKDHKPSVWFSLNGERLGTYNGHQGAVWCVDVDWTTTRLITGAGDMSTKLWDVETGSVLGTIPCNSAARTANFSFSGNQASYSTDKAMGHNSELFIIDVRNVDSSISSQSPVLKLTMNQSIQTKITSMLWGALDETVITGHENGSIRIWDLRTAKELNSVNDHTGVINDMQLSADGTMLVSASKDTTAKLFDSESLMCLKTYKTERPVNSAAISPIHEHVVLGGGQEAMEVTTTSTKSGKFDSRLFHLVYEEEFARVKGHFGPINSLAFHPDGKSYATGGEDGFVRVQVFDASYYEFVFE.

WD repeat units follow at residues 8–47 (GHER…RLGT), 50–91 (GHQG…GTIP), 148–187 (SIQT…ELNS), 190–229 (DHTG…CLKT), and 287–328 (GHFG…FVFE).

The protein belongs to the eIF-3 subunit I family. Component of the eukaryotic translation initiation factor 3 (eIF-3) complex.

It is found in the cytoplasm. Its function is as follows. Component of the eukaryotic translation initiation factor 3 (eIF-3) complex, which is involved in protein synthesis of a specialized repertoire of mRNAs and, together with other initiation factors, stimulates binding of mRNA and methionyl-tRNAi to the 40S ribosome. The eIF-3 complex specifically targets and initiates translation of a subset of mRNAs involved in cell proliferation. This chain is Eukaryotic translation initiation factor 3 subunit I, found in Culex quinquefasciatus (Southern house mosquito).